Reading from the N-terminus, the 285-residue chain is uncharacterized protein (285 aa).

H110, D131, H133, D135, D214, and D216 together coordinate Mn(2+).

It belongs to the arginase family. It depends on Mn(2+) as a cofactor.

This is an uncharacterized protein from Methanothermus fervidus.